Consider the following 174-residue polypeptide: RNA pyrophosphohydrolase (174 aa).

In terms of domain architecture, Nudix hydrolase spans 6–149; the sequence is GFRANVGIVI…KREVYRRAMK (144 aa). Residues 38-59 carry the Nudix box motif; that stretch reads GGIDEGETAEQTMYRELYEEVG.

It belongs to the Nudix hydrolase family. RppH subfamily. The cofactor is a divalent metal cation.

Accelerates the degradation of transcripts by removing pyrophosphate from the 5'-end of triphosphorylated RNA, leading to a more labile monophosphorylated state that can stimulate subsequent ribonuclease cleavage. In Pseudoalteromonas atlantica (strain T6c / ATCC BAA-1087), this protein is RNA pyrophosphohydrolase.